The chain runs to 123 residues: Large ribosomal subunit protein uL14c (123 aa).

Belongs to the universal ribosomal protein uL14 family. As to quaternary structure, part of the 50S ribosomal subunit.

The protein resides in the plastid. Its subcellular location is the chloroplast. Binds to 23S rRNA. This chain is Large ribosomal subunit protein uL14c, found in Lolium perenne (Perennial ryegrass).